A 126-amino-acid chain; its full sequence is MLIGVGTDIVQIPRIEKILNIYQELFAKKILALKELKQFTLLNKTNHATFLAKRFSAKEAVSKAFGVGIGRGINFKDITILNDNLGKPTVEISSHYTNKLAPFNIHLSLSDDYPICIAFAIIESNC.

2 residues coordinate Mg(2+): aspartate 8 and glutamate 59.

Belongs to the P-Pant transferase superfamily. AcpS family. It depends on Mg(2+) as a cofactor.

The protein localises to the cytoplasm. The enzyme catalyses apo-[ACP] + CoA = holo-[ACP] + adenosine 3',5'-bisphosphate + H(+). Functionally, transfers the 4'-phosphopantetheine moiety from coenzyme A to a Ser of acyl-carrier-protein. The protein is Holo-[acyl-carrier-protein] synthase of Rickettsia prowazekii (strain Madrid E).